Here is a 117-residue protein sequence, read N- to C-terminus: Gamma-aminobutyric acid receptor-associated protein-like 2 (117 aa).

Lys24 is modified (N6-acetyllysine). Phosphoserine occurs at positions 39, 87, and 88. Gly116 carries Phosphatidylethanolamine amidated glycine; alternate lipidation. Gly116 carries the Phosphatidylserine amidated glycine; alternate lipid modification. A propeptide (removed in mature form) is located at residue Phe117.

It belongs to the ATG8 family. Monomer. Interacts with ATG3, ATG7, ATG13 and ULK1. Interacts with TP53INP1 and TP53INP2. Interacts with TBC1D25. Directly interacts with SQSTM1 and BNIP3. Interacts with TECPR2 and PCM1. Interacts with TBC1D5. Interacts with TRIM5. Interacts with MEFV and TRIM21. Interacts with WDFY3. Interacts with UBA5; promoting recruitment of UBA5 to the endoplasmic reticulum membrane. Interacts with GOSR1. Interacts with KBTBD6 and KBTBD7; the interaction is direct. Interacts with reticulophagy regulators RETREG1, RETREG2 and RETREG3. Interacts with IRGM. Interacts with DNM2. Interacts with NCOA4. Interacts with IRGQ. Post-translationally, the precursor molecule is cleaved by ATG4 (ATG4A, ATG4B, ATG4C or ATG4D) to expose the glycine at the C-terminus and form the cytosolic form, GABARAPL2-I. The processed form is then activated by APG7L/ATG7, transferred to ATG3 and conjugated to phosphatidylethanolamine (PE) phospholipid to form the membrane-bound form, GABARAPL2-II. During non-canonical autophagy, the processed form is conjugated to phosphatidylserine (PS) phospholipid. ATG4 proteins also mediate the delipidation of PE-conjugated forms required for GABARAPL2 recycling when autophagosomes fuse with lysosomes. In addition, ATG4B and ATG4D mediate delipidation of ATG8 proteins conjugated to PS during non-canonical autophagy. ATG4B constitutes the major protein for proteolytic activation. ATG4D is the main enzyme for delipidation activity. In terms of processing, phosphorylation at Ser-87 and Ser-88 by TBK1 prevents interaction with ATG4 (ATG4A, ATG4B, ATG4C or ATG4D). Phosphorylation by TBK1 on autophagosomes prevents their delipidation by ATG4 and premature removal from nascent autophagosomes. Ubiquitous. Expressed at high levels in the brain, heart, prostate, ovary, spleen and skeletal muscle. Expressed at very low levels in lung, thymus and small intestine.

It is found in the cytoplasmic vesicle. The protein localises to the autophagosome. Its subcellular location is the endoplasmic reticulum membrane. The protein resides in the golgi apparatus. Its function is as follows. Ubiquitin-like modifier involved in intra-Golgi traffic. Modulates intra-Golgi transport through coupling between NSF activity and SNAREs activation. It first stimulates the ATPase activity of NSF which in turn stimulates the association with GOSR1. Involved in autophagy. Plays a role in mitophagy which contributes to regulate mitochondrial quantity and quality by eliminating the mitochondria to a basal level to fulfill cellular energy requirements and preventing excess ROS production. Whereas LC3s are involved in elongation of the phagophore membrane, the GABARAP/GATE-16 subfamily is essential for a later stage in autophagosome maturation. The polypeptide is Gamma-aminobutyric acid receptor-associated protein-like 2 (Bos taurus (Bovine)).